The sequence spans 73 residues: Large ribosomal subunit protein bL31 (73 aa).

Belongs to the bacterial ribosomal protein bL31 family. Type A subfamily. Part of the 50S ribosomal subunit.

Functionally, binds the 23S rRNA. The protein is Large ribosomal subunit protein bL31 of Bartonella henselae (strain ATCC 49882 / DSM 28221 / CCUG 30454 / Houston 1) (Rochalimaea henselae).